The following is a 129-amino-acid chain: Trefoil factor 2 (129 aa).

An N-terminal signal peptide occupies residues 1-23 (MGPRGAPLLAVVLVLGLHALVEG). 2 P-type domains span residues 29 to 73 (CRCS…FHPL) and 79 to 122 (EQCV…FFPQ). Intrachain disulfides connect Cys29-Cys127, Cys31-Cys58, Cys42-Cys57, Cys52-Cys69, Cys81-Cys107, Cys91-Cys106, and Cys101-Cys118.

As to expression, stomach and pancreas.

It is found in the secreted. Its function is as follows. Inhibits gastrointestinal motility and gastric acid secretion. Could function as a structural component of gastric mucus, possibly by stabilizing glycoproteins in the mucus gel through interactions with carbohydrate side chains. The protein is Trefoil factor 2 (Tff2) of Mus musculus (Mouse).